We begin with the raw amino-acid sequence, 890 residues long: uncharacterized protein (890 aa).

The N-terminal stretch at 1-20 (MKILKSLVLLVLFMAMPAKA) is a signal peptide. Helical transmembrane passes span 518–538 (AALT…ALKL), 567–587 (TYFF…VVGA), 613–633 (LLFI…IITI), 651–671 (VIAF…IILM), 684–704 (ISTL…FLLI), and 775–795 (FLVL…SYGL). Residues 860–890 (KARKPEGGEHTNKFLAERNDVPKKEEGERKE) are disordered. The span at 862–890 (RKPEGGEHTNKFLAERNDVPKKEEGERKE) shows a compositional bias: basic and acidic residues.

This sequence belongs to the TrbL/VirB6 family.

The protein resides in the cell membrane. This is an uncharacterized protein from Rickettsia felis (strain ATCC VR-1525 / URRWXCal2) (Rickettsia azadi).